Here is a 141-residue protein sequence, read N- to C-terminus: Nucleoside diphosphate kinase (141 aa).

6 residues coordinate ATP: K11, F59, R87, T93, R104, and N114. H117 serves as the catalytic Pros-phosphohistidine intermediate.

Belongs to the NDK family. In terms of assembly, homotetramer. The cofactor is Mg(2+).

Its subcellular location is the cytoplasm. The enzyme catalyses a 2'-deoxyribonucleoside 5'-diphosphate + ATP = a 2'-deoxyribonucleoside 5'-triphosphate + ADP. The catalysed reaction is a ribonucleoside 5'-diphosphate + ATP = a ribonucleoside 5'-triphosphate + ADP. Functionally, major role in the synthesis of nucleoside triphosphates other than ATP. The ATP gamma phosphate is transferred to the NDP beta phosphate via a ping-pong mechanism, using a phosphorylated active-site intermediate. In Mannheimia succiniciproducens (strain KCTC 0769BP / MBEL55E), this protein is Nucleoside diphosphate kinase.